Here is a 510-residue protein sequence, read N- to C-terminus: Maturase K (510 aa).

The protein belongs to the intron maturase 2 family. MatK subfamily.

It is found in the plastid. Its function is as follows. Usually encoded in the trnK tRNA gene intron. Probably assists in splicing its own and other chloroplast group II introns. In Aneura mirabilis (Parasitic liverwort), this protein is Maturase K.